Consider the following 133-residue polypeptide: MGMTSDTIADLLTRIRNALKAEHLYVDLEHSKMRESIVKILKHHGFLARYLVKEENRKRTMRIFLQYSDDRRPVIRQLKRVSKPSRRVYVPAAKIPYVFGNMGISVLSTSQGVLDGSTARAKNIGGELLCLVW.

It belongs to the universal ribosomal protein uS8 family. In terms of assembly, part of the 30S ribosomal subunit. Contacts proteins S5 and S12.

In terms of biological role, one of the primary rRNA binding proteins, it binds directly to 16S rRNA central domain where it helps coordinate assembly of the platform of the 30S subunit. The polypeptide is Small ribosomal subunit protein uS8 (Chlamydia felis (strain Fe/C-56) (Chlamydophila felis)).